The following is a 180-amino-acid chain: Oligoribonuclease (180 aa).

The Exonuclease domain maps to 7–170; sequence LIWIDLEMTG…DDIRESIAEL (164 aa). Residue Tyr128 is part of the active site.

It belongs to the oligoribonuclease family.

It is found in the cytoplasm. 3'-to-5' exoribonuclease specific for small oligoribonucleotides. This is Oligoribonuclease from Pseudomonas paraeruginosa (strain DSM 24068 / PA7) (Pseudomonas aeruginosa (strain PA7)).